Consider the following 495-residue polypeptide: UDP-N-acetylmuramoyl-L-alanyl-D-glutamate--2,6-diaminopimelate ligase (495 aa).

UDP-N-acetyl-alpha-D-muramoyl-L-alanyl-D-glutamate-binding positions include Leu27, Ser29, and 44–46; that span reads HQA. An ATP-binding site is contributed by 116-122; that stretch reads GTNGKTT. UDP-N-acetyl-alpha-D-muramoyl-L-alanyl-D-glutamate contacts are provided by residues Asn157, 158 to 159, Ser185, Gln191, and Arg193; that span reads TT. Position 225 is an N6-carboxylysine (Lys225). Meso-2,6-diaminopimelate contacts are provided by residues Arg390, 414–417, Gly465, and Glu469; that span reads DNPR. The short motif at 414-417 is the Meso-diaminopimelate recognition motif element; it reads DNPR.

Belongs to the MurCDEF family. MurE subfamily. It depends on Mg(2+) as a cofactor. Carboxylation is probably crucial for Mg(2+) binding and, consequently, for the gamma-phosphate positioning of ATP.

It is found in the cytoplasm. The catalysed reaction is UDP-N-acetyl-alpha-D-muramoyl-L-alanyl-D-glutamate + meso-2,6-diaminopimelate + ATP = UDP-N-acetyl-alpha-D-muramoyl-L-alanyl-gamma-D-glutamyl-meso-2,6-diaminopimelate + ADP + phosphate + H(+). It functions in the pathway cell wall biogenesis; peptidoglycan biosynthesis. Catalyzes the addition of meso-diaminopimelic acid to the nucleotide precursor UDP-N-acetylmuramoyl-L-alanyl-D-glutamate (UMAG) in the biosynthesis of bacterial cell-wall peptidoglycan. The polypeptide is UDP-N-acetylmuramoyl-L-alanyl-D-glutamate--2,6-diaminopimelate ligase (Escherichia coli O157:H7).